A 102-amino-acid chain; its full sequence is MIHKLTSEERKTRLEGLPHWTAVPGRDAIQRSLRFADFNEAFGFMTRIAIKAQEMNHHPEWFNVYNRVDITLSTHDAHGLTERDILLAQFIDHVCAHTQPAA.

The protein belongs to the pterin-4-alpha-carbinolamine dehydratase family.

The enzyme catalyses (4aS,6R)-4a-hydroxy-L-erythro-5,6,7,8-tetrahydrobiopterin = (6R)-L-erythro-6,7-dihydrobiopterin + H2O. The protein is Putative pterin-4-alpha-carbinolamine dehydratase of Burkholderia ambifaria (strain ATCC BAA-244 / DSM 16087 / CCUG 44356 / LMG 19182 / AMMD) (Burkholderia cepacia (strain AMMD)).